Consider the following 411-residue polypeptide: Citrate synthase (411 aa).

Residues His-304 and Asp-363 contribute to the active site.

Belongs to the citrate synthase family.

The enzyme catalyses oxaloacetate + acetyl-CoA + H2O = citrate + CoA + H(+). Its pathway is carbohydrate metabolism; tricarboxylic acid cycle; isocitrate from oxaloacetate: step 1/2. The sequence is that of Citrate synthase (gltA) from Rickettsia conorii subsp. caspia (strain A-167) (Astrakhan rickettsia).